Consider the following 439-residue polypeptide: Probable cysteine protease atg4 (439 aa).

Positions 65 to 91 (LSTTETTTPPDSTVGSLESSSEYDNCD) are disordered. Residues 66–77 (STTETTTPPDST) are compositionally biased toward low complexity. Residues 78–91 (VGSLESSSEYDNCD) are compositionally biased toward polar residues. Cysteine 158 acts as the Nucleophile in catalysis. Residues aspartate 332 and histidine 334 contribute to the active site.

Belongs to the peptidase C54 family.

The protein localises to the cytoplasm. It localises to the nucleus. The protein resides in the preautophagosomal structure. It carries out the reaction [protein]-C-terminal L-amino acid-glycyl-phosphatidylethanolamide + H2O = [protein]-C-terminal L-amino acid-glycine + a 1,2-diacyl-sn-glycero-3-phosphoethanolamine. In terms of biological role, cysteine protease that plays a key role in cytoplasm to vacuole transport (Cvt) and autophagy by mediating both proteolytic activation and delipidation of ATG8. Required for selective autophagic degradation of the nucleus (nucleophagy) as well as for mitophagy which contributes to regulate mitochondrial quantity and quality by eliminating the mitochondria to a basal level to fulfill cellular energy requirements and preventing excess ROS production. The protease activity is required for proteolytic activation of ATG8: cleaves the C-terminal amino acid of ATG8 to reveal a C-terminal glycine. ATG8 ubiquitin-like activity requires the exposure of the glycine at the C-terminus for its conjugation to phosphatidylethanolamine (PE) and its insertion to membranes, which is necessary for autophagy. The ATG8-PE conjugate mediates tethering between adjacent membranes and stimulates membrane hemifusion, leading to expansion of the autophagosomal membrane during autophagy. In addition to the protease activity, also catalyzes deconjugation of PE-conjugated forms of ATG8 during macroautophagy: ATG8 delipidation is required to release the protein from membranes, which facilitates multiple events during macroautophagy, and especially for efficient autophagosome biogenesis, the assembly of ATG9-containing tubulovesicular clusters into phagophores/autophagosomes, and for the disassembly of PAS-associated ATG components. ATG8 delipidation by ATG4 also recycles ATG8-PE generated on inappropriate membranes to maintain a reservoir of unlipidated ATG8 that is required for autophagosome formation at the PAS. In Sclerotinia sclerotiorum (strain ATCC 18683 / 1980 / Ss-1) (White mold), this protein is Probable cysteine protease atg4 (atg4).